A 618-amino-acid polypeptide reads, in one-letter code: Probable Xaa-Pro aminopeptidase P (618 aa).

Aspartate 414, aspartate 425, glutamate 523, and glutamate 537 together coordinate Mn(2+).

The protein belongs to the peptidase M24B family. Mn(2+) serves as cofactor.

It carries out the reaction Release of any N-terminal amino acid, including proline, that is linked to proline, even from a dipeptide or tripeptide.. In terms of biological role, catalyzes the removal of a penultimate prolyl residue from the N-termini of peptides. This Metarhizium robertsii (strain ARSEF 23 / ATCC MYA-3075) (Metarhizium anisopliae (strain ARSEF 23)) protein is Probable Xaa-Pro aminopeptidase P (AMPP).